The sequence spans 662 residues: MNLTEDYMVFEDVAIHFSQEEWGILNDVQRHLHSDVMLENFALLSSVGCWHGAKDEEAPSKQCVSVGVSQVTTLKPALSTQKAQPCETCSSLLKDILHLAEHDGTHPKRTAKLYLHQKEHLREKLTRSDEGRPSFVNDSVHLAKRNLTCMQGGKDFTGDSDLQQQALHSGWKPHRDTHGVEAFQSGQNNYSCTQCGKDFCHQHTLFEHQKIHTEERPYECSECGKLFRYNSDLIKHQRNHTGERPYKCSECGKAFSLKYNVVQHQKIHTGERPYECSECGKAFLRKSHLLQHQRIHTRPRPYVCSECGKAFLTQAHLVGHQKIHTGERPYGCNECGKYFMYSSALIRHQKVHTGERPFYCCECGKFFMDSCTLIIHQRVHTGEKPYECNECGKFFRYRSTLIRHQKVHTGEKPYECSECGKFFMDTSTLIIHQRVHTGEKPYECNKCGKFFRYCFTLNRHQRVHSGERPYECSECGKFFVDSCTLKSHQRVHTGERPFECSICGKSFRCRSTLDTHQRIHTGERPYECSECGKFFRHNSNHIRHRRNHFGERSFECTECGRVFSQNSHLIRHQKVHTRERTYKCSKCGKFFMDSSTLISHERVHTGEKPYECSECGKVFRYNSSLIKHRRIHTGERPYQCSECGRVFNQNSHLIQHQKVHTR.

The KRAB domain maps to 8 to 101 (MVFEDVAIHF…LLKDILHLAE (94 aa)). C2H2-type zinc fingers lie at residues 190–212 (YSCT…QKIH), 218–240 (YECS…QRNH), 246–268 (YKCS…QKIH), 274–296 (YECS…QRIH), 302–324 (YVCS…QKIH), 358–380 (FYCC…QRVH), 386–408 (YECN…QKVH), 414–436 (YECS…QRVH), 442–464 (YECN…QRVH), 470–492 (YECS…QRVH), 498–520 (FECS…QRIH), 526–548 (YECS…RRNH), 554–576 (FECT…QKVH), 582–604 (YKCS…ERVH), 610–632 (YECS…RRIH), and 638–660 (YQCS…QKVH).

Belongs to the krueppel C2H2-type zinc-finger protein family.

The protein localises to the nucleus. Its function is as follows. May be involved in transcriptional regulation. The polypeptide is Zinc finger protein 17 (ZNF17) (Homo sapiens (Human)).